Here is a 470-residue protein sequence, read N- to C-terminus: Alpha-1A adrenergic receptor (470 aa).

Over 1 to 27 the chain is Extracellular; the sequence is MTPSSVTLNCSNCSHVLAPELNTVKAV. Asn-9 and Asn-12 each carry an N-linked (GlcNAc...) asparagine glycan. A helical transmembrane segment spans residues 28-51; it reads VLGMVLGIFILFGVIGNILVILSV. Over 52–64 the chain is Cytoplasmic; the sequence is VCHRHLQTVTYYF. Residues 65–88 form a helical membrane-spanning segment; sequence IVNLAVADLLLSSTVLPFSAIFEI. Topologically, residues 89 to 99 are extracellular; that stretch reads LDRWVFGRVFC. Cys-99 and Cys-176 are disulfide-bonded. A helical membrane pass occupies residues 100 to 122; the sequence is NIWAAVDVLCCTASIMSLCVISV. The Cytoplasmic portion of the chain corresponds to 123–143; sequence DRYIGVSYPLRYPAIMTKRRA. A helical membrane pass occupies residues 144–167; sequence LLAVMLLWVLSVIISIGPLFGWKE. Over 168-181 the chain is Extracellular; sequence PAPEDETVCKITEE. Residues 182 to 205 form a helical membrane-spanning segment; the sequence is PGYAIFSAVGSFYLPLAIILAMYC. Residues 206–271 are Cytoplasmic-facing; that stretch reads RVYVVAQKES…FSREKKAAKT (66 aa). Residues 272–295 form a helical membrane-spanning segment; sequence LGIVVGCFVLCWLPFFLVLPIGSI. At 296 to 303 the chain is on the extracellular side; the sequence is FPAYRPSD. The chain crosses the membrane as a helical span at residues 304-327; sequence TVFKITFWLGYFNSCINPIIYLCS. At 328–470 the chain is on the cytoplasmic side; sequence NQEFKKAFQS…LSLSEKGESV (143 aa). Cys-343 is lipidated: S-palmitoyl cysteine. The tract at residues 375–416 is disordered; the sequence is GAPCRLSPSSSVALSRTPSSRDSREWRVFSGGPINSGPGPTE. Residues 381 to 392 show a composition bias toward polar residues; sequence SPSSSVALSRTP.

It belongs to the G-protein coupled receptor 1 family. Adrenergic receptor subfamily. ADRA1A sub-subfamily.

Its subcellular location is the cell membrane. Its function is as follows. This alpha-adrenergic receptor mediates its action by association with G proteins that activate a phosphatidylinositol-calcium second messenger system. This chain is Alpha-1A adrenergic receptor (adra1a), found in Oryzias latipes (Japanese rice fish).